The sequence spans 248 residues: Probable septum site-determining protein MinC (248 aa).

The interval 115-144 is disordered; it reads PTAVSPPPPPPPPARAEPAPPAARPAPGRM. Pro residues predominate over residues 118 to 138; it reads VSPPPPPPPPARAEPAPPAAR.

Belongs to the MinC family. As to quaternary structure, interacts with MinD and FtsZ.

Its function is as follows. Cell division inhibitor that blocks the formation of polar Z ring septums. Rapidly oscillates between the poles of the cell to destabilize FtsZ filaments that have formed before they mature into polar Z rings. Prevents FtsZ polymerization. The chain is Probable septum site-determining protein MinC from Xanthomonas euvesicatoria pv. vesicatoria (strain 85-10) (Xanthomonas campestris pv. vesicatoria).